Consider the following 379-residue polypeptide: MSGNTTLLLSNPTNVLDNSSVLNVSVSPPVLKWETPTFTTAARFRVAATLVLFVFAAASNLSVLLSVTRGRGRRLASHLRPLIASLASADLVMTFVVMPLDAVWNVTVQWYAGDAMCKLMCFLKLFAMHSAAFILVVVSLDRHHAILHPLDTLDAGRRNRRMLLTAWILSLLLASPQLFIFRAIKAKGVDFVQCATHGSFQQHWQETAYNMFHFVTLYVFPLLVMSLCYTRILVEINRQMHRSKDKAGEPCLRRSGTDMIPKARMKTLKMTIIIVASFVICWTPYYLLGIWYWFQPQMLHVIPDYVHHVFFVFGNLNTCCDPVIYGFFTPSFRADLSRCFCWRNQNASAKSLPHFSGHRREVSGEAESDLGSGDQPSGQ.

Over 1–45 (MSGNTTLLLSNPTNVLDNSSVLNVSVSPPVLKWETPTFTTAARFR) the chain is Extracellular. N-linked (GlcNAc...) asparagine glycosylation is found at Asn4, Asn18, and Asn23. The chain crosses the membrane as a helical span at residues 46–65 (VAATLVLFVFAAASNLSVLL). The Cytoplasmic segment spans residues 66–80 (SVTRGRGRRLASHLR). A helical transmembrane segment spans residues 81–100 (PLIASLASADLVMTFVVMPL). Over 101 to 118 (DAVWNVTVQWYAGDAMCK) the chain is Extracellular. A glycan (N-linked (GlcNAc...) asparagine) is linked at Asn105. Cys117 and Cys194 are oxidised to a cystine. Residues 119 to 140 (LMCFLKLFAMHSAAFILVVVSL) traverse the membrane as a helical segment. At 141-167 (DRHHAILHPLDTLDAGRRNRRMLLTAW) the chain is on the cytoplasmic side. The chain crosses the membrane as a helical span at residues 168–184 (ILSLLLASPQLFIFRAI). At 185–210 (KAKGVDFVQCATHGSFQQHWQETAYN) the chain is on the extracellular side. Residues 211–230 (MFHFVTLYVFPLLVMSLCYT) traverse the membrane as a helical segment. Residues 231-283 (RILVEINRQMHRSKDKAGEPCLRRSGTDMIPKARMKTLKMTIIIVASFVICWT) are Cytoplasmic-facing. Residues 284-302 (PYYLLGIWYWFQPQMLHVI) form a helical membrane-spanning segment. Topologically, residues 303-308 (PDYVHH) are extracellular. Residues 309-328 (VFFVFGNLNTCCDPVIYGFF) form a helical membrane-spanning segment. Residues 329–379 (TPSFRADLSRCFCWRNQNASAKSLPHFSGHRREVSGEAESDLGSGDQPSGQ) lie on the Cytoplasmic side of the membrane. The segment at 355-379 (FSGHRREVSGEAESDLGSGDQPSGQ) is disordered.

The protein belongs to the G-protein coupled receptor 1 family. In terms of processing, phosphorylated on the C-terminal cytoplasmic tail.

The protein resides in the cell membrane. Its function is as follows. Receptor for gonadotropin releasing hormone II (GnRH II). This receptor mediates its action by association with G proteins that activate a phosphatidylinositol-calcium second messenger system. This Clarias gariepinus (North African catfish) protein is Gonadotropin-releasing hormone II receptor.